The following is a 75-amino-acid chain: UPF0346 protein LGAS_0911 (75 aa).

This sequence belongs to the UPF0346 family.

This chain is UPF0346 protein LGAS_0911, found in Lactobacillus gasseri (strain ATCC 33323 / DSM 20243 / BCRC 14619 / CIP 102991 / JCM 1131 / KCTC 3163 / NCIMB 11718 / NCTC 13722 / AM63).